A 491-amino-acid polypeptide reads, in one-letter code: UDP-N-acetylmuramate--L-alanine ligase (491 aa).

Residue 126–132 coordinates ATP; that stretch reads GTHGKTT.

This sequence belongs to the MurCDEF family.

The protein localises to the cytoplasm. It carries out the reaction UDP-N-acetyl-alpha-D-muramate + L-alanine + ATP = UDP-N-acetyl-alpha-D-muramoyl-L-alanine + ADP + phosphate + H(+). The protein operates within cell wall biogenesis; peptidoglycan biosynthesis. Its function is as follows. Cell wall formation. The protein is UDP-N-acetylmuramate--L-alanine ligase of Yersinia enterocolitica serotype O:8 / biotype 1B (strain NCTC 13174 / 8081).